A 124-amino-acid chain; its full sequence is Urease subunit beta (124 aa).

Belongs to the urease beta subunit family. In terms of assembly, heterotrimer of UreA (gamma), UreB (beta) and UreC (alpha) subunits. Three heterotrimers associate to form the active enzyme.

Its subcellular location is the cytoplasm. The enzyme catalyses urea + 2 H2O + H(+) = hydrogencarbonate + 2 NH4(+). Its pathway is nitrogen metabolism; urea degradation; CO(2) and NH(3) from urea (urease route): step 1/1. The protein is Urease subunit beta of Bacillus velezensis (strain DSM 23117 / BGSC 10A6 / LMG 26770 / FZB42) (Bacillus amyloliquefaciens subsp. plantarum).